A 195-amino-acid polypeptide reads, in one-letter code: MQEPHDQEPIEKQKLPGMDDVLETEHSGTVAGNTERAGEDAAPSLEQQLKEAEIRAAEHHDAWLRAKAETENIRKRAQTDIASAHKYAIDNFSVQLLAVMDSLDAALATENSTLENLRDGVELTRKQLAAVFEKFNIHTIDPQGEKFDPHQHEAMCAVESDFAPNTVIQVMQKGYMLHDRVIRPAMVTVSKAKGT.

Over residues methionine 1–lysine 14 the composition is skewed to basic and acidic residues. Positions methionine 1–leucine 45 are disordered.

The protein belongs to the GrpE family. In terms of assembly, homodimer.

It is found in the cytoplasm. Functionally, participates actively in the response to hyperosmotic and heat shock by preventing the aggregation of stress-denatured proteins, in association with DnaK and GrpE. It is the nucleotide exchange factor for DnaK and may function as a thermosensor. Unfolded proteins bind initially to DnaJ; upon interaction with the DnaJ-bound protein, DnaK hydrolyzes its bound ATP, resulting in the formation of a stable complex. GrpE releases ADP from DnaK; ATP binding to DnaK triggers the release of the substrate protein, thus completing the reaction cycle. Several rounds of ATP-dependent interactions between DnaJ, DnaK and GrpE are required for fully efficient folding. The sequence is that of Protein GrpE from Nitrosomonas europaea (strain ATCC 19718 / CIP 103999 / KCTC 2705 / NBRC 14298).